A 218-amino-acid polypeptide reads, in one-letter code: MGQKINPTGLRVGIIKDWESRWFADKDYADLLHEDYVVREYIEKRLKDASVSKVEIERAANRLNISLHTAKPGMVIGKGGSEIETLRTDITNLAKGKRVHVNVVEVKNPDAVAKLVAENIARQLEGRVSFRRAMKQSIQRSMRSGIKGIKTEVSGRLGGADIARSEKYSEGTVPLHTLRADIDYGTAEADTTYGKIGVKVWLHHGEVLPTKKAASNEQ.

A KH type-2 domain is found at 38–107 (VREYIEKRLK…RVHVNVVEVK (70 aa)).

This sequence belongs to the universal ribosomal protein uS3 family. As to quaternary structure, part of the 30S ribosomal subunit. Forms a tight complex with proteins S10 and S14.

Its function is as follows. Binds the lower part of the 30S subunit head. Binds mRNA in the 70S ribosome, positioning it for translation. The chain is Small ribosomal subunit protein uS3 from Exiguobacterium sibiricum (strain DSM 17290 / CCUG 55495 / CIP 109462 / JCM 13490 / 255-15).